Here is a 317-residue protein sequence, read N- to C-terminus: Putrescine transport system permease protein PotH (317 aa).

The Cytoplasmic segment spans residues 1–31 (MSTLEPAAQSKPPGGFKLWLSQLQMKHGRKL). The helical transmembrane segment at 32-51 (VIALPYIWLILLFLLPFLIV) threads the bilayer. The Periplasmic portion of the chain corresponds to 52-104 (FKISLAEMARAIPPYTELMEWADGQLSITLNLGNFLQLTDDPLYFDAYLQSLQ). One can recognise an ABC transmembrane type-1 domain in the interval 99-305 (YLQSLQVAAI…LLLIVPIMWF (207 aa)). The chain crosses the membrane as a helical span at residues 105–124 (VAAISTFCCLLIGYPLAWAV). Residues 125–133 (AHSKPSTRN) lie on the Cytoplasmic side of the membrane. A helical transmembrane segment spans residues 134-153 (ILLLLVILPSWTSFLIRVYA). Residues 154–184 (WMGILKNNGVLNNFLLWLGVIDQPLTILHTN) lie on the Periplasmic side of the membrane. A helical membrane pass occupies residues 185 to 204 (LAVYIGIVYAYVPFMVLPIY). At 205 to 239 (TALIRIDYSLVEAALDLGARPLKTFFTVIVPLTKG) the chain is on the cytoplasmic side. A helical membrane pass occupies residues 240–259 (GIIAGSMLVFIPAVGEFVIP). At 260–284 (ELLGGPDSIMIGRVLWQEFFNNRDW) the chain is on the periplasmic side. The helical transmembrane segment at 285–304 (PVASAVAIIMLLLLIVPIMW) threads the bilayer. The Cytoplasmic segment spans residues 305–317 (FHKHQQKSVGEHG).

Belongs to the binding-protein-dependent transport system permease family. CysTW subfamily. The complex is composed of two ATP-binding proteins (PotG), two transmembrane proteins (PotH and PotI) and a solute-binding protein (PotF).

The protein localises to the cell inner membrane. Its activity is regulated as follows. Transport is feedback inhibited by intracellular polyamines. Functionally, part of the ABC transporter complex PotFGHI involved in putrescine uptake. Responsible for the translocation of the substrate across the membrane. Imports putrescine for maintenance of the optimal concentration of polyamines necessary for cell growth in the presence of glucose. This chain is Putrescine transport system permease protein PotH, found in Escherichia coli (strain K12).